Here is a 321-residue protein sequence, read N- to C-terminus: Cytochrome c biogenesis protein CcsA (321 aa).

Helical transmembrane passes span 17-37, 41-61, 68-88, 143-163, 227-247, 260-277, and 288-308; these read IISI…IIGL, LEKG…IRWV, LSNL…IHIF, MLLS…LLVI, IINL…VWAN, ETWA…LHTR, and AIVA…VNLL.

This sequence belongs to the CcmF/CycK/Ccl1/NrfE/CcsA family. In terms of assembly, may interact with Ccs1.

It is found in the plastid. The protein localises to the chloroplast thylakoid membrane. Its function is as follows. Required during biogenesis of c-type cytochromes (cytochrome c6 and cytochrome f) at the step of heme attachment. This is Cytochrome c biogenesis protein CcsA from Piper cenocladum (Ant piper).